A 155-amino-acid chain; its full sequence is MEEREDAPKDFIKLKSEKLSVGEVSELVVSPYCGAVSLFIGTTRNNFEGKKVIHLEYEAYTSMAETEMKKICRDVRQKWPSVKHIAVHHRLGVVPITEASVIIAVSSPHRAESLEAVMYCINTLKASVPIWKKEIYEDEYSWKENKECFWANSEK.

Substrate contacts are provided by residues 109-110 (HR), K125, and 132-134 (KKE).

Belongs to the MoaE family. MOCS2B subfamily. Heterotetramer; composed of 2 small (MOCS2A) and 2 large (MOCS2B) subunits.

Its subcellular location is the cytoplasm. The protein localises to the cytosol. It catalyses the reaction 2 [molybdopterin-synthase sulfur-carrier protein]-C-terminal-Gly-aminoethanethioate + cyclic pyranopterin phosphate + H2O = molybdopterin + 2 [molybdopterin-synthase sulfur-carrier protein]-C-terminal Gly-Gly + 2 H(+). The protein operates within cofactor biosynthesis; molybdopterin biosynthesis. Its function is as follows. Catalytic subunit of the molybdopterin synthase complex, a complex that catalyzes the conversion of precursor Z into molybdopterin. Acts by mediating the incorporation of 2 sulfur atoms from thiocarboxylated MOCS2A into precursor Z to generate a dithiolene group. This chain is Molybdopterin synthase catalytic subunit, found in Taeniopygia guttata (Zebra finch).